Here is a 158-residue protein sequence, read N- to C-terminus: Dysbindin domain-containing protein 1 (158 aa).

The disordered stretch occupies residues 1 to 38 (MEPSEGASPGGLVKEVDMPQAALSAPVPVTGTSGQSPM). Phosphoserine occurs at positions 95 and 119. Residues 96–158 (DDENVASDSH…ILTVERPKED (63 aa)) form a disordered region. Residues 125-141 (TRAEQNREKQPFGDPER) show a composition bias toward basic and acidic residues.

The protein belongs to the dysbindin family.

The chain is Dysbindin domain-containing protein 1 (DBNDD1) from Bos taurus (Bovine).